The sequence spans 117 residues: Large ribosomal subunit protein uL18 (117 aa).

Belongs to the universal ribosomal protein uL18 family. As to quaternary structure, part of the 50S ribosomal subunit; part of the 5S rRNA/L5/L18/L25 subcomplex. Contacts the 5S and 23S rRNAs.

This is one of the proteins that bind and probably mediate the attachment of the 5S RNA into the large ribosomal subunit, where it forms part of the central protuberance. This chain is Large ribosomal subunit protein uL18, found in Polynucleobacter necessarius subsp. necessarius (strain STIR1).